Reading from the N-terminus, the 313-residue chain is Protoheme IX farnesyltransferase (313 aa).

Helical transmembrane passes span 32-52 (VMSL…GDFH), 53-73 (PVLA…AGAL), 120-140 (VLVN…YVVI), 153-173 (IVIG…AVTG), 180-200 (LLLF…LALF), 226-246 (ILLY…LGYF), 248-268 (AVYG…AIRV), and 284-304 (LFKF…IEVV).

Belongs to the UbiA prenyltransferase family. Protoheme IX farnesyltransferase subfamily.

The protein resides in the cell inner membrane. It catalyses the reaction heme b + (2E,6E)-farnesyl diphosphate + H2O = Fe(II)-heme o + diphosphate. It participates in porphyrin-containing compound metabolism; heme O biosynthesis; heme O from protoheme: step 1/1. Its function is as follows. Converts heme B (protoheme IX) to heme O by substitution of the vinyl group on carbon 2 of heme B porphyrin ring with a hydroxyethyl farnesyl side group. The protein is Protoheme IX farnesyltransferase of Rhodopseudomonas palustris (strain BisB5).